Here is a 561-residue protein sequence, read N- to C-terminus: Arf-GAP domain and FG repeat-containing protein 1 (561 aa).

The Arf-GAP domain occupies 11–135 (EKHLKMLRDM…WYVPPEQAKV (125 aa)). Residues 29–52 (CFDCDQRGPTYVNMTVGSFVCTSC) form a C4-type zinc finger. A Phosphoserine modification is found at Ser167. Residues 171–193 (LHLNKGTPTQSPVVGRSQGQQQE) are disordered. Residues 176-191 (GTPTQSPVVGRSQGQQ) show a composition bias toward polar residues. Phosphothreonine is present on Thr177. Ser181 and Ser362 each carry phosphoserine. O-linked (GlcNAc) serine glycosylation occurs at Ser367. Positions 409-451 (PVGASPQTQPASSGPAPFGATPSTNPFVAATGPSAASSTNPFQ) are disordered. The span at 442-451 (SAASSTNPFQ) shows a compositional bias: polar residues.

Interacts with EPS15R and EPS15. Interacts with FCHO1. O-glycosylated.

The protein resides in the nucleus. Its subcellular location is the cytoplasmic vesicle. Its function is as follows. Required for vesicle docking or fusion during acrosome biogenesis. May play a role in RNA trafficking or localization. This Rattus norvegicus (Rat) protein is Arf-GAP domain and FG repeat-containing protein 1 (Agfg1).